Reading from the N-terminus, the 455-residue chain is Probable ATP-dependent RNA helicase DDX47 (455 aa).

The segment covering 1 to 10 (MAAPEEHDSP) has biased composition (basic and acidic residues). Positions 1–20 (MAAPEEHDSPTEASQPIVEE) are disordered. A2 bears the N-acetylalanine mark. Position 9 is a phosphoserine (S9). Positions 24-52 (KTFKDLGVTDVLCEACDQLGWTKPTKIQI) match the Q motif motif. Residues 55-226 (IPLALQGRDI…RAALKNPVKC (172 aa)) enclose the Helicase ATP-binding domain. 68–75 (AETGSGKT) contacts ATP. T149 is modified (phosphothreonine). Positions 174-177 (DEAD) match the DEAD box motif. One can recognise a Helicase C-terminal domain in the interval 237–397 (KLQQYYIFIP…GFPTQDDEVM (161 aa)). The span at 413–428 (ELREHGEKKKRSREDA) shows a compositional bias: basic and acidic residues. Residues 413-455 (ELREHGEKKKRSREDAGDNDDTEGAIGVRNKVAGGKMKKRKGR) form a disordered region. S424 bears the Phosphoserine mark.

This sequence belongs to the DEAD box helicase family. DDX47/RRP3 subfamily. As to quaternary structure, interacts with AGO1 and AGO2. Interacts with GABARAP. Interacts with NOL8; the interaction is RNA-dependent. Expressed in skin, lung and breast. Also expressed in the brain.

It localises to the nucleus. It is found in the nucleolus. It catalyses the reaction ATP + H2O = ADP + phosphate + H(+). Required for efficient ribosome biogenesis. May have a role in mRNA splicing. Involved in apoptosis. In Homo sapiens (Human), this protein is Probable ATP-dependent RNA helicase DDX47 (DDX47).